The sequence spans 281 residues: Pantothenate synthetase (281 aa).

ATP is bound at residue 31–38; sequence MGNLHAGH. Catalysis depends on histidine 38, which acts as the Proton donor. (R)-pantoate is bound at residue glutamine 62. Glutamine 62 serves as a coordination point for beta-alanine. ATP is bound at residue 150–153; sequence GKKD. Glutamine 156 contacts (R)-pantoate. ATP-binding positions include valine 179 and 187 to 190; that span reads MSSR.

The protein belongs to the pantothenate synthetase family. In terms of assembly, homodimer.

The protein resides in the cytoplasm. The catalysed reaction is (R)-pantoate + beta-alanine + ATP = (R)-pantothenate + AMP + diphosphate + H(+). Its pathway is cofactor biosynthesis; (R)-pantothenate biosynthesis; (R)-pantothenate from (R)-pantoate and beta-alanine: step 1/1. Its function is as follows. Catalyzes the condensation of pantoate with beta-alanine in an ATP-dependent reaction via a pantoyl-adenylate intermediate. This Xylella fastidiosa (strain 9a5c) protein is Pantothenate synthetase.